The following is a 597-amino-acid chain: Large ribosomal subunit assembly factor BipA (597 aa).

The region spanning 3–198 is the tr-type G domain; the sequence is LPIRNVAIIA…AILHHVPPPA (196 aa). GTP-binding positions include 15 to 20 and 128 to 131; these read DHGKTT and NKID.

This sequence belongs to the TRAFAC class translation factor GTPase superfamily. Classic translation factor GTPase family. BipA subfamily. In terms of assembly, monomer.

It localises to the cytoplasm. The catalysed reaction is GTP + H2O = GDP + phosphate + H(+). Its function is as follows. A 50S ribosomal subunit assembly protein with GTPase activity, required for 50S subunit assembly at low temperatures, may also play a role in translation. Binds GTP and analogs. Binds the 70S ribosome between the 30S and 50S subunits, in a similar position as ribosome-bound EF-G; it contacts a number of ribosomal proteins, both rRNAs and the A-site tRNA. In Synechocystis sp. (strain ATCC 27184 / PCC 6803 / Kazusa), this protein is Large ribosomal subunit assembly factor BipA.